The chain runs to 358 residues: Carbamoyl phosphate synthase small chain (358 aa).

CPSase stretches follow at residues 1-168 (MYNR…PALG) and 1-171 (MYNR…GRGR). Residues Ser46, Gly220, and Gly222 each contribute to the L-glutamine site. The Glutamine amidotransferase type-1 domain maps to 172-358 (RVVLVDLGMK…FIKNIDNNMK (187 aa)). Catalysis depends on Cys247, which acts as the Nucleophile. 5 residues coordinate L-glutamine: Met248, Gln251, Asn289, Gly291, and Tyr292. Residues His332 and Glu334 contribute to the active site.

It belongs to the CarA family. In terms of assembly, composed of two chains; the small (or glutamine) chain promotes the hydrolysis of glutamine to ammonia, which is used by the large (or ammonia) chain to synthesize carbamoyl phosphate. Tetramer of heterodimers (alpha,beta)4.

It carries out the reaction hydrogencarbonate + L-glutamine + 2 ATP + H2O = carbamoyl phosphate + L-glutamate + 2 ADP + phosphate + 2 H(+). The catalysed reaction is L-glutamine + H2O = L-glutamate + NH4(+). Its pathway is amino-acid biosynthesis; L-arginine biosynthesis; carbamoyl phosphate from bicarbonate: step 1/1. The protein operates within pyrimidine metabolism; UMP biosynthesis via de novo pathway; (S)-dihydroorotate from bicarbonate: step 1/3. In terms of biological role, small subunit of the glutamine-dependent carbamoyl phosphate synthetase (CPSase). CPSase catalyzes the formation of carbamoyl phosphate from the ammonia moiety of glutamine, carbonate, and phosphate donated by ATP, constituting the first step of 2 biosynthetic pathways, one leading to arginine and/or urea and the other to pyrimidine nucleotides. The small subunit (glutamine amidotransferase) binds and cleaves glutamine to supply the large subunit with the substrate ammonia. This is Carbamoyl phosphate synthase small chain from Fusobacterium nucleatum subsp. nucleatum (strain ATCC 25586 / DSM 15643 / BCRC 10681 / CIP 101130 / JCM 8532 / KCTC 2640 / LMG 13131 / VPI 4355).